We begin with the raw amino-acid sequence, 243 residues long: Pleckstrin homology domain-containing family B member 1 (243 aa).

Positions 21 to 128 constitute a PH domain; it reads ALVRGGWLWR…WKTALMEANS (108 aa).

Binds transducins. Homodimer. Interacts (via PH domain) with MYO1C. Interacts (via PH domain) with MYO7A. As to expression, highly expressed in retina and brain. In retina, abundantly expressed in photoreceptors. Isoform 4 is the predominant isoform expressed in mature olfactory receptor neurons and vestibular and cochlear hair cells. Also expressed in cells with possible sensory function, including peripheral retinal ganglion cells, cochlear interdental cells, and neurons of the circumventricular organ (at protein level).

It localises to the membrane. It is found in the cytoplasm. The polypeptide is Pleckstrin homology domain-containing family B member 1 (Plekhb1) (Mus musculus (Mouse)).